A 682-amino-acid chain; its full sequence is Putative protein RhsE (682 aa).

The segment covering E348–L360 has biased composition (basic and acidic residues). A disordered region spans residues E348–G372.

It belongs to the RHS family.

In terms of biological role, rhs elements have a nonessential function. They may play an important role in the natural ecology of the cell. In Escherichia coli (strain K12), this protein is Putative protein RhsE (rhsE).